The primary structure comprises 362 residues: 11-beta-hydroxysteroid dehydrogenase B (362 aa).

Residues 10–30 (FVVPPASLLMLAFTWPTLFFI) form a helical; Signal-anchor for type II membrane protein membrane-spanning segment. The Proline-knob signature appears at 13–26 (PPASLLMLAFTWPT). Position 55 to 81 (55 to 81 (GASSGIGEQIAYQYAKRGANLVLVARR)) interacts with NADP(+). S185 provides a ligand contact to substrate. The Proton acceptor role is filled by Y198. Residues 198 to 202 (YSAAK) and K202 each bind NADP(+). Residues 321 to 362 (TGRPLLETSSPRRSAVMEGSSPRRLPPGPLTFSPAFQQQKSE) form a disordered region.

Belongs to the short-chain dehydrogenases/reductases (SDR) family. In terms of tissue distribution, expressed in seeds (at protein level). Not expressed in stem, leaf or root (at protein level).

Its subcellular location is the lipid droplet. It is found in the membrane. It carries out the reaction an 11beta-hydroxysteroid + NADP(+) = an 11-oxosteroid + NADPH + H(+). It catalyses the reaction corticosterone + NADP(+) = 11-dehydrocorticosterone + NADPH + H(+). The enzyme catalyses 17beta-estradiol + NADP(+) = estrone + NADPH + H(+). Its function is as follows. Has dehydrogenase activity against corticosterone (11 beta-hydroxysteroid) and estradiol (17 beta-hydroxysteroid), with similar activities to both sterols in the presence of NADP(+), but negligible activity to either sterol in the presence of NAD(+). May be involved in signal transduction regulated by various sterols. This is 11-beta-hydroxysteroid dehydrogenase B from Sesamum indicum (Oriental sesame).